A 120-amino-acid polypeptide reads, in one-letter code: uncharacterized protein (120 aa).

Positions 45 to 78 (QLISESLKIAQKDLMEVRKELRKRKIAIRETERD) form a coiled coil.

This is an uncharacterized protein from Bacillus subtilis (strain 168).